A 376-amino-acid polypeptide reads, in one-letter code: GTPase Obg (376 aa).

An Obg domain is found at 2–161; it reads ASFVDEVLIR…RVVHVELRIV (160 aa). Residues 162-328 enclose the OBG-type G domain; it reads ADVGFVGLPN…LQEAFVRLSD (167 aa). GTP is bound by residues 168-175, 193-197, 215-218, 282-285, and 309-311; these read GLPNAGKS, FTTRI, DVPG, TKLD, and SVH. Mg(2+)-binding residues include serine 175 and threonine 195.

Belongs to the TRAFAC class OBG-HflX-like GTPase superfamily. OBG GTPase family. As to quaternary structure, monomer. Mg(2+) is required as a cofactor.

The protein resides in the cytoplasm. Its function is as follows. An essential GTPase which binds GTP, GDP and possibly (p)ppGpp with moderate affinity, with high nucleotide exchange rates and a fairly low GTP hydrolysis rate. Plays a role in control of the cell cycle, stress response, ribosome biogenesis and in those bacteria that undergo differentiation, in morphogenesis control. This Treponema pallidum (strain Nichols) protein is GTPase Obg.